Consider the following 195-residue polypeptide: Translation initiation factor IF-3 (195 aa).

The interval 158–195 is disordered; it reads EQSEVQQRPKREGRNMIMFLSPRKTPLIKKEEDAKENN. Residues 185–195 are compositionally biased toward basic and acidic residues; that stretch reads IKKEEDAKENN.

The protein belongs to the IF-3 family. Monomer.

It localises to the cytoplasm. Its function is as follows. IF-3 binds to the 30S ribosomal subunit and shifts the equilibrium between 70S ribosomes and their 50S and 30S subunits in favor of the free subunits, thus enhancing the availability of 30S subunits on which protein synthesis initiation begins. In Prochlorococcus marinus (strain MIT 9515), this protein is Translation initiation factor IF-3.